Here is a 123-residue protein sequence, read N- to C-terminus: Large ribosomal subunit protein bL17 (123 aa).

This sequence belongs to the bacterial ribosomal protein bL17 family. In terms of assembly, part of the 50S ribosomal subunit. Contacts protein L32.

This Borreliella burgdorferi (strain ZS7) (Borrelia burgdorferi) protein is Large ribosomal subunit protein bL17.